The chain runs to 274 residues: 2,3,4,5-tetrahydropyridine-2,6-dicarboxylate N-succinyltransferase (274 aa).

Substrate-binding residues include Arg106 and Asp143.

The protein belongs to the transferase hexapeptide repeat family. As to quaternary structure, homotrimer.

It localises to the cytoplasm. The catalysed reaction is (S)-2,3,4,5-tetrahydrodipicolinate + succinyl-CoA + H2O = (S)-2-succinylamino-6-oxoheptanedioate + CoA. It participates in amino-acid biosynthesis; L-lysine biosynthesis via DAP pathway; LL-2,6-diaminopimelate from (S)-tetrahydrodipicolinate (succinylase route): step 1/3. The chain is 2,3,4,5-tetrahydropyridine-2,6-dicarboxylate N-succinyltransferase from Paracidovorax citrulli (strain AAC00-1) (Acidovorax citrulli).